Here is a 482-residue protein sequence, read N- to C-terminus: MSPTTAANQAKKLIKVPEMRRIKHIHFVGIGGAGMCGIAEVLANQGYKISGSDINASKTTQQLEENGIKVYIGHEAENIKNANVLVVSTAIDPENPEVKAAIEQRIPIVRRAEMLGELMRYRHGIAVAGTHGKTTTTSLLTTMLAEENLDPTYVIGGLLNSTGVNAALGESRFIVAEADESDASFLYLQPMAAIVTNIDADHMDTYEGSFDKLKDTFVQFLHNLPFYGLAVVCGDDANIREILPRVGRPVITYGFNEDNDIRAIDVERDGMRSHFTVLRKGREPLRLTINQPGLHNVLNALAAIGVATDEGVSDEAISRALKGFSGVGRRFQVQGEFELGEGNVKLVDDYGHHPKEVEATIKAARQSHPDRRLVMLFQPHRYSRTRDCFDDFIEVLSQVDQLLLLEVYPAGEKPIVGADSRTLARSIRLRGQVEPILIDPVEGNLQNIMQNVLQPNDLLLTQGAGNVGAISVELAQHHLYVK.

Residue 129-135 participates in ATP binding; it reads GTHGKTT.

This sequence belongs to the MurCDEF family.

The protein localises to the cytoplasm. The catalysed reaction is UDP-N-acetyl-alpha-D-muramate + L-alanine + ATP = UDP-N-acetyl-alpha-D-muramoyl-L-alanine + ADP + phosphate + H(+). It participates in cell wall biogenesis; peptidoglycan biosynthesis. Functionally, cell wall formation. The polypeptide is UDP-N-acetylmuramate--L-alanine ligase (Acinetobacter baumannii (strain SDF)).